The following is a 237-amino-acid chain: uncharacterized protein (237 aa).

In terms of domain architecture, Response regulatory spans 3-116 (SALLIDDERF…RLAKTVQRLL (114 aa)). D54 bears the 4-aspartylphosphate mark. The region spanning 135–236 (IPCTGLNRIV…LKELKEMLGF (102 aa)) is the HTH LytTR-type domain.

This is an uncharacterized protein from Vibrio cholerae serotype O1 (strain ATCC 39315 / El Tor Inaba N16961).